Consider the following 250-residue polypeptide: N-acetylmuramoyl-L-alanine amidase CwlH (250 aa).

The signal sequence occupies residues 1-44; sequence MVTIKKDFIPVSNDNRPGYAMAPAYITVHNTANTAKGADAKMHA. Residues 45-141 enclose the N-acetylmuramoyl-L-alanine amidase domain; sequence KFVKNPNTSE…KKWSGKECPR (97 aa).

The protein belongs to the N-acetylmuramoyl-L-alanine amidase 2 family.

The protein resides in the secreted. The catalysed reaction is Hydrolyzes the link between N-acetylmuramoyl residues and L-amino acid residues in certain cell-wall glycopeptides.. Autolysins are involved in some important biological processes such as cell separation, cell-wall turnover, competence for genetic transformation, formation of the flagella and sporulation. Could play a role in mother cell lysis with CwlC. The polypeptide is N-acetylmuramoyl-L-alanine amidase CwlH (cwlH) (Bacillus subtilis (strain 168)).